The following is a 321-amino-acid chain: Lipoyl synthase (321 aa).

7 residues coordinate [4Fe-4S] cluster: cysteine 68, cysteine 73, cysteine 79, cysteine 94, cysteine 98, cysteine 101, and serine 308. A Radical SAM core domain is found at 80 to 297; that stretch reads FNHGTATFMI…KVLADELGFT (218 aa).

The protein belongs to the radical SAM superfamily. Lipoyl synthase family. The cofactor is [4Fe-4S] cluster.

It localises to the cytoplasm. The enzyme catalyses [[Fe-S] cluster scaffold protein carrying a second [4Fe-4S](2+) cluster] + N(6)-octanoyl-L-lysyl-[protein] + 2 oxidized [2Fe-2S]-[ferredoxin] + 2 S-adenosyl-L-methionine + 4 H(+) = [[Fe-S] cluster scaffold protein] + N(6)-[(R)-dihydrolipoyl]-L-lysyl-[protein] + 4 Fe(3+) + 2 hydrogen sulfide + 2 5'-deoxyadenosine + 2 L-methionine + 2 reduced [2Fe-2S]-[ferredoxin]. Its pathway is protein modification; protein lipoylation via endogenous pathway; protein N(6)-(lipoyl)lysine from octanoyl-[acyl-carrier-protein]: step 2/2. Functionally, catalyzes the radical-mediated insertion of two sulfur atoms into the C-6 and C-8 positions of the octanoyl moiety bound to the lipoyl domains of lipoate-dependent enzymes, thereby converting the octanoylated domains into lipoylated derivatives. This Shewanella sp. (strain ANA-3) protein is Lipoyl synthase.